The following is a 32-amino-acid chain: Cytochrome b6-f complex subunit 7 (32 aa).

A helical transmembrane segment spans residues 5-25 (IFTVAGVMWALVLTGLSVGFG).

Belongs to the PetM family. As to quaternary structure, the 4 large subunits of the cytochrome b6-f complex are cytochrome b6, subunit IV (17 kDa polypeptide, PetD), cytochrome f and the Rieske protein, while the 4 small subunits are PetG, PetL, PetM and PetN. The complex functions as a dimer.

It is found in the plastid. It localises to the chloroplast thylakoid membrane. Component of the cytochrome b6-f complex, which mediates electron transfer between photosystem II (PSII) and photosystem I (PSI), cyclic electron flow around PSI, and state transitions. This is Cytochrome b6-f complex subunit 7 from Emiliania huxleyi (Coccolithophore).